Here is a 200-residue protein sequence, read N- to C-terminus: Cytochrome c biogenesis ATP-binding export protein CcmA (200 aa).

Residues 3–199 enclose the ABC transporter domain; it reads LSGRRVICVR…DSRELRIGGV (197 aa). 35-42 contributes to the ATP binding site; sequence GRNGSGKT.

The protein belongs to the ABC transporter superfamily. CcmA exporter (TC 3.A.1.107) family. In terms of assembly, the complex is composed of two ATP-binding proteins (CcmA) and two transmembrane proteins (CcmB).

Its subcellular location is the cell inner membrane. The enzyme catalyses heme b(in) + ATP + H2O = heme b(out) + ADP + phosphate + H(+). Functionally, part of the ABC transporter complex CcmAB involved in the biogenesis of c-type cytochromes; once thought to export heme, this seems not to be the case, but its exact role is uncertain. Responsible for energy coupling to the transport system. The protein is Cytochrome c biogenesis ATP-binding export protein CcmA of Bradyrhizobium diazoefficiens (strain JCM 10833 / BCRC 13528 / IAM 13628 / NBRC 14792 / USDA 110).